A 235-amino-acid chain; its full sequence is Phosphoglycolate phosphatase (235 aa).

Asp14 serves as the catalytic Nucleophile. Mg(2+) is bound by residues Asp14, Asp16, and Asp177.

The protein belongs to the HAD-like hydrolase superfamily. CbbY/CbbZ/Gph/YieH family. It depends on Mg(2+) as a cofactor.

The catalysed reaction is 2-phosphoglycolate + H2O = glycolate + phosphate. The protein operates within organic acid metabolism; glycolate biosynthesis; glycolate from 2-phosphoglycolate: step 1/1. Functionally, specifically catalyzes the dephosphorylation of 2-phosphoglycolate. Is involved in the dissimilation of the intracellular 2-phosphoglycolate formed during the DNA repair of 3'-phosphoglycolate ends, a major class of DNA lesions induced by oxidative stress. The chain is Phosphoglycolate phosphatase from Neisseria meningitidis serogroup A / serotype 4A (strain DSM 15465 / Z2491).